Here is a 940-residue protein sequence, read N- to C-terminus: Isoleucine--tRNA ligase (940 aa).

A 'HIGH' region motif is present at residues proline 58 to histidine 68. Glutamate 563 lines the L-isoleucyl-5'-AMP pocket. A 'KMSKS' region motif is present at residues lysine 604–serine 608. Residue lysine 607 coordinates ATP. The Zn(2+) site is built by cysteine 903, cysteine 906, cysteine 923, and cysteine 926.

Belongs to the class-I aminoacyl-tRNA synthetase family. IleS type 1 subfamily. As to quaternary structure, monomer. Requires Zn(2+) as cofactor.

The protein localises to the cytoplasm. It carries out the reaction tRNA(Ile) + L-isoleucine + ATP = L-isoleucyl-tRNA(Ile) + AMP + diphosphate. Catalyzes the attachment of isoleucine to tRNA(Ile). As IleRS can inadvertently accommodate and process structurally similar amino acids such as valine, to avoid such errors it has two additional distinct tRNA(Ile)-dependent editing activities. One activity is designated as 'pretransfer' editing and involves the hydrolysis of activated Val-AMP. The other activity is designated 'posttransfer' editing and involves deacylation of mischarged Val-tRNA(Ile). The chain is Isoleucine--tRNA ligase from Buchnera aphidicola subsp. Acyrthosiphon pisum (strain APS) (Acyrthosiphon pisum symbiotic bacterium).